A 365-amino-acid polypeptide reads, in one-letter code: Poly(rC)-binding protein 2 (365 aa).

KH domains follow at residues 13 to 75 and 97 to 162; these read TLTI…FAMI and PVTL…VKQI. Residue Lys115 forms a Glycyl lysine isopeptide (Lys-Gly) (interchain with G-Cter in SUMO2) linkage. Residue Ser173 is modified to Phosphoserine. Lys185 is covalently cross-linked (Glycyl lysine isopeptide (Lys-Gly) (interchain with G-Cter in SUMO2)). Residues Ser189 and Ser272 each carry the phosphoserine modification. The KH 3 domain maps to 287-351; the sequence is TTSHELTIPN…ASISLAQYLI (65 aa). Lys322 is covalently cross-linked (Glycyl lysine isopeptide (Lys-Gly) (interchain with G-Cter in SUMO2)). Phosphoserine occurs at positions 364 and 365.

Identified in a mRNP complex, at least composed of DHX9, DDX3X, ELAVL1, HNRNPU, IGF2BP1, ILF3, PABPC1, PCBP2, PTBP2, STAU1, STAU2, SYNCRIP and YBX1. Interacts with IFIH1 and RNF135. Interacts with MAVS (via C-terminus) and ITCH (via WW domains). Interacts with CGAS; preventing the formation of liquid-like droplets in which CGAS is activated. In terms of processing, phosphorylated. The non-phosphorylated form(s) exhibited the strongest poly(rC)-binding activity. Post-translationally, (Microbial infection) Proteolytically cleaved by picornavirus proteinase 3CD. As to expression, detected in all tissues examined.

It is found in the nucleus. It localises to the cytoplasm. Its function is as follows. Single-stranded nucleic acid binding protein that binds preferentially to oligo dC. Major cellular poly(rC)-binding protein. Also binds poly(rU). Acts as a negative regulator of antiviral signaling. Negatively regulates cellular antiviral responses mediated by MAVS signaling. It acts as an adapter between MAVS and the E3 ubiquitin ligase ITCH, therefore triggering MAVS ubiquitination and degradation. Negativeley regulates the cGAS-STING pathway via interaction with CGAS, preventing the formation of liquid-like droplets in which CGAS is activated. Together with PCBP1, required for erythropoiesis, possibly by regulating mRNA splicing. Functionally, (Microbial infection) In case of infection by poliovirus, binds to the viral internal ribosome entry site (IRES) and stimulates the IRES-mediated translation. Also plays a role in initiation of viral RNA replication in concert with the viral protein 3CD. The sequence is that of Poly(rC)-binding protein 2 from Homo sapiens (Human).